Reading from the N-terminus, the 279-residue chain is MKLEKDRDVLSLKGVSVRYVDSTVALHPTSLDVKQGEFLVLLGASGAGKSTLLRSINGLVLPTKGEVSIPGLAGGVVNAKTLREHRKRCGMVFQQHHLIGRQSVLRNVLMGKLGDRGAFASLWPWSKKDKLEALTVIERVGLLEKALSRADALSGGQQQRVGIARALIQKPRILLADEPVASLDPATAHSVLTLLHEICKKDHLTAIVSLHQVELARSFADRIIGLRQGAVVFEGRAEQLSPDVARNLYAKQSNASNTSASTDSPRTLQSSQTKELLPC.

In terms of domain architecture, ABC transporter spans 10–253 (LSLKGVSVRY…VARNLYAKQS (244 aa)). 43-50 (GASGAGKS) is a binding site for ATP. Positions 253-262 (SNASNTSAST) are enriched in low complexity. Residues 253–279 (SNASNTSASTDSPRTLQSSQTKELLPC) form a disordered region. Residues 263-279 (DSPRTLQSSQTKELLPC) are compositionally biased toward polar residues.

The protein belongs to the ABC transporter superfamily. Phosphonates importer (TC 3.A.1.9.1) family. The complex is composed of two ATP-binding proteins (PhnC), two transmembrane proteins (PhnE) and a solute-binding protein (PhnD).

It localises to the cell inner membrane. The enzyme catalyses phosphonate(out) + ATP + H2O = phosphonate(in) + ADP + phosphate + H(+). Functionally, part of the ABC transporter complex PhnCDE involved in phosphonates import. Responsible for energy coupling to the transport system. The polypeptide is Phosphonates import ATP-binding protein PhnC 2 (Cupriavidus metallidurans (strain ATCC 43123 / DSM 2839 / NBRC 102507 / CH34) (Ralstonia metallidurans)).